We begin with the raw amino-acid sequence, 486 residues long: Hexosaminidase D (486 aa).

E149 functions as the Proton donor in the catalytic mechanism.

This sequence belongs to the glycosyl hydrolase 20 family. As to quaternary structure, homodimer; disulfide-linked. In terms of tissue distribution, expressed in synovial fibroblasts and synovial membranes.

It localises to the cytoplasm. It is found in the nucleus. Its subcellular location is the extracellular vesicle. The catalysed reaction is Hydrolysis of terminal non-reducing N-acetyl-D-hexosamine residues in N-acetyl-beta-D-hexosaminides.. With respect to regulation, inhibited by O-(2-acetamido-2-deoxy-D-glucopyranosylidene)amino N-phenylcarbamate (PUGNAc). Inhibited by galacto-NAG-thiazoline. Its function is as follows. Has hexosaminidase activity. Responsible for the cleavage of the monosaccharides N-acetylglucosamine (GlcNAc) and N-acetylgalactosamine (GalNAc) from cellular substrates. Has a preference for galactosaminide over glucosaminide substrates. This is Hexosaminidase D from Homo sapiens (Human).